An 88-amino-acid polypeptide reads, in one-letter code: UPF0223 protein OB1419 (88 aa).

This sequence belongs to the UPF0223 family.

This Oceanobacillus iheyensis (strain DSM 14371 / CIP 107618 / JCM 11309 / KCTC 3954 / HTE831) protein is UPF0223 protein OB1419.